We begin with the raw amino-acid sequence, 499 residues long: Maturase K (499 aa).

The protein belongs to the intron maturase 2 family. MatK subfamily.

It localises to the plastid. It is found in the chloroplast. Its function is as follows. Usually encoded in the trnK tRNA gene intron. Probably assists in splicing its own and other chloroplast group II introns. The protein is Maturase K of Neltuma juliflora (Mesquite).